Here is a 271-residue protein sequence, read N- to C-terminus: Serine O-acetyltransferase (271 aa).

The active-site Acyl-thioester intermediate is Cys-112. Catalysis depends on His-204, which acts as the Proton acceptor. Glu-206 is an active-site residue.

It belongs to the MetA family.

The catalysed reaction is L-serine + acetyl-CoA = O-acetyl-L-serine + CoA. It functions in the pathway amino-acid biosynthesis; L-cysteine biosynthesis; L-cysteine from L-serine: step 1/2. In terms of biological role, catalyzes the formation of O-acetylserine (OAS) from L-serine and acetyl-CoA. To a lesser extent, is also able to use succinyl-CoA and propionyl-CoA as acyl donors, but not butyryl-CoA. Does not acylate D-serine and L-homoserine. This is Serine O-acetyltransferase from Lacticaseibacillus casei (Lactobacillus casei).